An 89-amino-acid chain; its full sequence is Large ribosomal subunit protein uL23cz/uL23cy (89 aa).

This sequence belongs to the universal ribosomal protein uL23 family. In terms of assembly, part of the 50S ribosomal subunit.

The protein resides in the plastid. The protein localises to the chloroplast. In terms of biological role, binds to 23S rRNA. The sequence is that of Large ribosomal subunit protein uL23cz/uL23cy (rpl23-A) from Calycanthus floridus var. glaucus (Eastern sweetshrub).